A 199-amino-acid chain; its full sequence is V-type proton ATPase subunit E (199 aa).

The protein belongs to the V-ATPase E subunit family.

Its function is as follows. Produces ATP from ADP in the presence of a proton gradient across the membrane. The chain is V-type proton ATPase subunit E from Clostridium botulinum (strain Loch Maree / Type A3).